Consider the following 580-residue polypeptide: MFS-type transporter thnB (580 aa).

Residues Met-1–Glu-33 are disordered. A compositionally biased stretch (polar residues) spans Val-14 to Ser-25. Helical transmembrane passes span Leu-60–Ile-80, Phe-92–Phe-112, Leu-125–Val-145, Ala-157–Ser-177, Ser-188–Phe-208, Trp-216–Phe-236, and Val-259–Gly-279. Asn-285 is a glycosylation site (N-linked (GlcNAc...) asparagine). The next 7 membrane-spanning stretches (helical) occupy residues Ser-286–Trp-306, Ile-331–Phe-351, Val-364–Val-384, Met-389–Tyr-409, Ile-421–Ile-441, Ser-457–Phe-477, and Phe-529–Ile-549.

This sequence belongs to the major facilitator superfamily.

It is found in the membrane. MFS-type transporter; part of the gene cluster that produces the tetronate natural products trihazones. The protein is MFS-type transporter thnB of Trichoderma harzianum (Hypocrea lixii).